Reading from the N-terminus, the 179-residue chain is Large ribosomal subunit protein uL5 (179 aa).

Belongs to the universal ribosomal protein uL5 family. In terms of assembly, part of the 50S ribosomal subunit; part of the 5S rRNA/L5/L18/L25 subcomplex. Contacts the 5S rRNA and the P site tRNA. Forms a bridge to the 30S subunit in the 70S ribosome.

Functionally, this is one of the proteins that bind and probably mediate the attachment of the 5S RNA into the large ribosomal subunit, where it forms part of the central protuberance. In the 70S ribosome it contacts protein S13 of the 30S subunit (bridge B1b), connecting the 2 subunits; this bridge is implicated in subunit movement. Contacts the P site tRNA; the 5S rRNA and some of its associated proteins might help stabilize positioning of ribosome-bound tRNAs. This Actinobacillus pleuropneumoniae serotype 5b (strain L20) protein is Large ribosomal subunit protein uL5.